Here is a 152-residue protein sequence, read N- to C-terminus: Lipoprotein signal peptidase (152 aa).

The next 2 helical transmembrane spans lie at asparagine 55 to methionine 75 and leucine 85 to phenylalanine 105. Active-site residues include aspartate 111 and aspartate 129. Residues valine 124 to leucine 144 traverse the membrane as a helical segment.

This sequence belongs to the peptidase A8 family.

The protein resides in the cell membrane. The enzyme catalyses Release of signal peptides from bacterial membrane prolipoproteins. Hydrolyzes -Xaa-Yaa-Zaa-|-(S,diacylglyceryl)Cys-, in which Xaa is hydrophobic (preferably Leu), and Yaa (Ala or Ser) and Zaa (Gly or Ala) have small, neutral side chains.. It participates in protein modification; lipoprotein biosynthesis (signal peptide cleavage). Functionally, this protein specifically catalyzes the removal of signal peptides from prolipoproteins. The sequence is that of Lipoprotein signal peptidase from Bacillus cereus (strain AH187).